The primary structure comprises 256 residues: Capsid protein (256 aa).

Positions 3 to 20 match the Bipartite nuclear localization signal motif; sequence KRPADIVISTPASKVRRK. The short motif at 40–54 is the Nuclear localization signal element; sequence RRRTWVNRPMYRKPM. Residues 68–85 fold into a zinc finger; the sequence is CEGPCKVQSYEQRHDVAH. Residues 101 to 122 carry the Nuclear export signal motif; sequence ITHRTGKRFCIKSIYVLGKIWM. A Bipartite nuclear localization signal motif is present at residues 200–247; it reads NRFYKIYNHCTYNHQEAAKYENHTENALLLYMACTHASNPVYATLKIR.

It belongs to the geminiviridae capsid protein family. As to quaternary structure, homomultimer. Binds to single-stranded and double-stranded viral DNA. Interacts (via nuclear localization signals) with host importin alpha-1a.

The protein localises to the virion. It localises to the host nucleus. Its function is as follows. Encapsidates the viral genome into characteristic twinned ('geminate') particles. Binds the genomic viral ssDNA and shuttles it into and out of the cell nucleus. Plays a role in protection of the genome from degradation, virus acquisition and transmission by insect vectors, infectivity, and systemic movement. The CP of monopartite geminiviruses is absolutely essential for virus movement. In Tomato leaf curl virus (strain Australia) (ToLCV), this protein is Capsid protein.